A 160-amino-acid polypeptide reads, in one-letter code: Transcriptional repressor NrdR (160 aa).

The segment at 3–34 (CPACNYNGTKVLDSRPVQDFGSIRRRRECESC) is a zinc-finger region. Positions 49 to 139 (LIIVKKDGTR…VYKQFKDINV (91 aa)) constitute an ATP-cone domain.

This sequence belongs to the NrdR family. Requires Zn(2+) as cofactor.

Negatively regulates transcription of bacterial ribonucleotide reductase nrd genes and operons by binding to NrdR-boxes. In Exiguobacterium sibiricum (strain DSM 17290 / CCUG 55495 / CIP 109462 / JCM 13490 / 255-15), this protein is Transcriptional repressor NrdR.